The chain runs to 543 residues: MTAEDILLRERTSTTTQRPVNSEQYLNVQLATAPVKNFQTTSEISRQTLVDTSNDDVYSIKNLKGSRNPISPSVSNVGFQSIFHTVDHPRSKVSVASNHSLRSNDNASAATSKSGSSQIGESHSVDTVECSNNLSKKLSSDAISITQKSLHSTPSGRYMKGKASGFFNRRNRAHTTISSDPASFLTDSSTLHNSSHSFRNVIKNFFQNKSHRHIGQDAIEPAIPNSLSKFLHSSYGRHKSPSQFIHTNAGQLVDSGTSVYSLNVNPSGVNPNTIVEDPLSGTDPASPNPVSMLHDLLRNLPSLEANYKHFNSQELTTLTNNIWNIFCSNVAELFRTQRIWKLRAKIENFNEVLEFYCILKTDPRVTHSGMNRIISDLKEFLVSSLYNLENQIVFNYSNEDTINNALKRLGVIWRIFYQEVYYDLAAVLLPLDQSIREDGNSTVLKSGNESRTHINGNYSIGFLLLMCFRDSIVLPCYENFVNSNDGISKSFQLYIFNQEEESNVTETDKLTLLQCFGILSTIQSNDRNQRIIEELLAGIRMSI.

Residue Tyr58 is modified to Phosphotyrosine. A Phosphoserine modification is found at Ser59. A disordered region spans residues 93–126 (VSVASNHSLRSNDNASAATSKSGSSQIGESHSVD). Residues 94 to 121 (SVASNHSLRSNDNASAATSKSGSSQIGE) show a composition bias toward polar residues. Phosphoserine is present on residues Ser139 and Ser144.

It belongs to the BIT61 family. The target of rapamycin complex 2 (TORC2) is composed of at least AVO1, AVO2, BIT61, LST8, TOR2 and TSC11. TORC2 forms a homodimer. Contrary to TORC1, TORC2 does not bind to and is not sensitive to FKBP-rapamycin.

The protein localises to the cell membrane. It is found in the vacuole membrane. Component of TORC2, which regulates cell cycle-dependent polarization of the actin-cytoskeleton and cell wall integrity. TORC2 controls polarity of the actin cytoskeleton, which is required for orienting the secretory pathway toward discrete growth sites, via the RHO1/PKC1/MAPK cell integrity pathway. In Saccharomyces cerevisiae (strain ATCC 204508 / S288c) (Baker's yeast), this protein is Target of rapamycin complex 2 subunit BIT61 (BIT61).